The primary structure comprises 377 residues: Chaperone MoxR1 (377 aa).

Residues 1-33 (MTSAGGFPAGAGGYQTPGGHSASPAHEAPPGGA) are disordered. Residues 7–16 (FPAGAGGYQT) show a composition bias toward gly residues. Low complexity predominate over residues 19–33 (GHSASPAHEAPPGGA). 78 to 85 (GVPGVAKT) provides a ligand contact to ATP.

This sequence belongs to the MoxR family. Interacts with RipA. Interacts with host Toll-like receptor 4 (TLR4).

Its function is as follows. Displays ATP-enhanced chaperone activity. Required for the proper folding of the peptidoglycan endopeptidase RipA and its secretion through the TAT secretion system. In vitro, prevents thermal aggregation of MalZ protein and protects the functional activity of the restriction enzyme NdeI from thermal inactivation. Could be a moonlighting protein that uses a multipronged approach to dampen host-directed immunity for efficient replication, survival and pathogenesis. Can enhance virulence by inhibiting autophagy and apoptosis, and disrupting cellular bioenergetics. Binds and activates host TLR4 on the surface of macrophage cells, leading to the activation of the host NFKB and MAPK signaling cascades and enhanced secretion of proinflammatory cytokines. Inhibits autophagic flux via activation of PI3K-AKT-MTOR-ULK1 signaling cascade and represses apoptosis via inhibiting protooncogene c-FOS and MAPK JNK1/2. Also induces robust disruption of cellular bioenergetics by metabolic reprogramming to rewire the citric acid cycle intermediates for its benefit. The polypeptide is Chaperone MoxR1 (Mycobacterium tuberculosis (strain ATCC 25618 / H37Rv)).